The primary structure comprises 486 residues: Galactose-1-phosphate uridylyltransferase (486 aa).

This sequence belongs to the galactose-1-phosphate uridylyltransferase type 2 family.

Its subcellular location is the cytoplasm. The enzyme catalyses alpha-D-galactose 1-phosphate + UDP-alpha-D-glucose = alpha-D-glucose 1-phosphate + UDP-alpha-D-galactose. The protein operates within carbohydrate metabolism; galactose metabolism. The chain is Galactose-1-phosphate uridylyltransferase from Lacticaseibacillus paracasei (strain ATCC 334 / BCRC 17002 / CCUG 31169 / CIP 107868 / KCTC 3260 / NRRL B-441) (Lactobacillus paracasei).